Here is a 509-residue protein sequence, read N- to C-terminus: UDP-N-acetylmuramyl-tripeptide synthetase (509 aa).

Ser30 serves as a coordination point for UDP-N-acetyl-alpha-D-muramoyl-L-alanyl-D-glutamate. Gly111–Thr117 provides a ligand contact to ATP. UDP-N-acetyl-alpha-D-muramoyl-L-alanyl-D-glutamate contacts are provided by residues Ser155–Thr156, Thr182, and Arg192. Lys224 carries the post-translational modification N6-carboxylysine.

Belongs to the MurCDEF family. MurE subfamily. In terms of processing, carboxylation is probably crucial for Mg(2+) binding and, consequently, for the gamma-phosphate positioning of ATP.

The protein localises to the cytoplasm. Its pathway is cell wall biogenesis; peptidoglycan biosynthesis. In terms of biological role, catalyzes the addition of an amino acid to the nucleotide precursor UDP-N-acetylmuramoyl-L-alanyl-D-glutamate (UMAG) in the biosynthesis of bacterial cell-wall peptidoglycan. The chain is UDP-N-acetylmuramyl-tripeptide synthetase from Roseiflexus sp. (strain RS-1).